Consider the following 101-residue polypeptide: Ribonuclease kappa-A (101 aa).

Helical transmembrane passes span 13–33 and 68–88; these read ACGI…GVFF and VSYN…FSFC.

This sequence belongs to the RNase K family.

The protein resides in the membrane. Functionally, endoribonuclease which preferentially cleaves ApU and ApG phosphodiester bonds. The protein is Ribonuclease kappa-A (rnasek-a) of Xenopus laevis (African clawed frog).